The chain runs to 550 residues: Arginine--tRNA ligase (550 aa).

A 'HIGH' region motif is present at residues 130-140 (ANPTGPIHIGG).

It belongs to the class-I aminoacyl-tRNA synthetase family. Monomer.

Its subcellular location is the cytoplasm. It catalyses the reaction tRNA(Arg) + L-arginine + ATP = L-arginyl-tRNA(Arg) + AMP + diphosphate. This chain is Arginine--tRNA ligase (argS), found in Mycolicibacterium smegmatis (strain ATCC 700084 / mc(2)155) (Mycobacterium smegmatis).